The following is a 368-amino-acid chain: Large ribosomal subunit protein mL46 (368 aa).

A disordered region spans residues 53 to 81; that stretch reads TATATTTTTLPPPHPPVTTSTGTHAATST. Positions 69-81 are enriched in low complexity; the sequence is VTTSTGTHAATST.

Belongs to the mitochondrion-specific ribosomal protein mL46 family. In terms of assembly, component of the mitochondrial large ribosomal subunit (mt-LSU). Mature N.crassa 74S mitochondrial ribosomes consist of a small (37S) and a large (54S) subunit. The 37S small subunit contains a 16S ribosomal RNA (16S mt-rRNA) and 32 different proteins. The 54S large subunit contains a 23S rRNA (23S mt-rRNA) and 42 different proteins.

It localises to the mitochondrion. Component of the mitochondrial ribosome (mitoribosome), a dedicated translation machinery responsible for the synthesis of mitochondrial genome-encoded proteins, including at least some of the essential transmembrane subunits of the mitochondrial respiratory chain. The mitoribosomes are attached to the mitochondrial inner membrane and translation products are cotranslationally integrated into the membrane. The polypeptide is Large ribosomal subunit protein mL46 (mrpl17) (Neurospora crassa (strain ATCC 24698 / 74-OR23-1A / CBS 708.71 / DSM 1257 / FGSC 987)).